A 107-amino-acid chain; its full sequence is Cytochrome c2 (107 aa).

Glutamine 1 is subject to Pyrrolidone carboxylic acid. Heme c contacts are provided by cysteine 13, cysteine 16, histidine 17, and methionine 79.

It belongs to the cytochrome c family. In terms of processing, binds 1 heme c group covalently per subunit.

Its subcellular location is the periplasm. Cytochrome c2 is found mainly in purple, non-sulfur, photosynthetic bacteria where it functions as the electron donor to the oxidized bacteriochlorophyll in the photophosphorylation pathway. However, it may also have a role in the respiratory chain and is found in some non-photosynthetic bacteria. This is Cytochrome c2 from Rhodoplanes tepidamans (Rhodoplanes cryptolactis).